We begin with the raw amino-acid sequence, 392 residues long: MDKQQFLAEYQDVFKEPGKDVFFSPGRINVIGEHTDYNGGHVFPCAISIGTYGVYGPREDTTVAIYSANSAKEEDSKIITFDINDTEPQNAKDEKWVNYFKGMLVYLKQRGFKIDHGFNLYIHGFLPYGSGLSSSASIEMLMGNILKDEFNLDIDEIELVKLGQKTENDFVGLNSGIMDQFAVGMGKENNAIYLDCNTLEYKYLPLELGDYEIIIMSTNKNHSLAGSKYNERVQECEEAVKRLNKKLDINKLGELDSDTFDQYTYLIDDDTLIRRARHAVSENERTKKAIDAMEKGDLEELGRLINASHVSLKYDYEVTGKELDTLAENAWNQPGCLGARMVGGGFAGSAIAIVKKSEAENFKKNVGKIYRDKIGYDASFYDAEVVDGPHKL.

Position 33-36 (33-36) interacts with substrate; sequence EHTD. ATP is bound by residues Ser-67 and 129–135; that span reads GSGLSSS. Ser-135 and Glu-167 together coordinate Mg(2+). Asp-179 functions as the Proton acceptor in the catalytic mechanism. Residue Tyr-229 coordinates substrate.

It belongs to the GHMP kinase family. GalK subfamily.

It localises to the cytoplasm. The enzyme catalyses alpha-D-galactose + ATP = alpha-D-galactose 1-phosphate + ADP + H(+). It participates in carbohydrate metabolism; galactose metabolism. Catalyzes the transfer of the gamma-phosphate of ATP to D-galactose to form alpha-D-galactose-1-phosphate (Gal-1-P). In Limosilactobacillus reuteri (strain DSM 20016) (Lactobacillus reuteri), this protein is Galactokinase.